Consider the following 671-residue polypeptide: DNA ligase (671 aa).

NAD(+) contacts are provided by residues 34 to 38 (DSEYD), 83 to 84 (SL), and E113. Catalysis depends on K115, which acts as the N6-AMP-lysine intermediate. Residues R136, E170, K286, and K310 each coordinate NAD(+). 4 residues coordinate Zn(2+): C404, C407, C422, and C427. The region spanning 590–671 (EEAGVFAGKT…FTQAVEQSEQ (82 aa)) is the BRCT domain.

The protein belongs to the NAD-dependent DNA ligase family. LigA subfamily. Mg(2+) serves as cofactor. Mn(2+) is required as a cofactor.

It carries out the reaction NAD(+) + (deoxyribonucleotide)n-3'-hydroxyl + 5'-phospho-(deoxyribonucleotide)m = (deoxyribonucleotide)n+m + AMP + beta-nicotinamide D-nucleotide.. Functionally, DNA ligase that catalyzes the formation of phosphodiester linkages between 5'-phosphoryl and 3'-hydroxyl groups in double-stranded DNA using NAD as a coenzyme and as the energy source for the reaction. It is essential for DNA replication and repair of damaged DNA. This is DNA ligase from Shouchella clausii (strain KSM-K16) (Alkalihalobacillus clausii).